Consider the following 364-residue polypeptide: MNAVIVDAKRTIFGNQNGLLKPFLPEDLAAPIIRCLSRKLEDQVDEVILGNATGRGGNLARLSALQAGLPLSVPGMTIDRQCGSGLEAVRYACSLIQAGAGTMYIAGGSESSSQSPFSERARFSPDAIGDPDMGIAAEYTAARYSISRSMQDEYALLSHQRSRNAHDEGFYREEVVALGELETDEAFLKTRPIEAIIPRAKPVFDTSSGTVTAANSSGIADGAAALLVMEEEKAAALGLKPVLRFIGSAVSGIHPNFPPAAPVVAIRQLLHTHDVTPDDIDLFEINEAFAVKICVCSQELGIPFSKINVRGGALALGHPYGASGAALVTRLFYEAKRRPDCQYAVAAIGSGGGIGLALLFEVLA.

Catalysis depends on Cys-82, which acts as the Acyl-thioester intermediate. His-318 acts as the Proton acceptor in catalysis.

Belongs to the thiolase-like superfamily. Thiolase family.

May be involved in fatty acid metabolism. The sequence is that of Putative acetyl-CoA C-acetyltransferase YhfS (yhfS) from Bacillus subtilis (strain 168).